Reading from the N-terminus, the 941-residue chain is DNA mismatch repair protein MutS (941 aa).

613 to 620 (GPNMAGKS) lines the ATP pocket.

Belongs to the DNA mismatch repair MutS family.

This protein is involved in the repair of mismatches in DNA. It is possible that it carries out the mismatch recognition step. This protein has a weak ATPase activity. The polypeptide is DNA mismatch repair protein MutS (Clostridium botulinum (strain Alaska E43 / Type E3)).